The sequence spans 833 residues: DNA ligase (833 aa).

NAD(+)-binding positions include 35–39 (DADYD), 84–85 (SL), and glutamate 115. Lysine 117 acts as the N6-AMP-lysine intermediate in catalysis. NAD(+) contacts are provided by arginine 138, glutamate 175, lysine 292, and lysine 316. The Zn(2+) site is built by cysteine 410, cysteine 413, cysteine 428, and cysteine 434. The BRCT domain maps to 750–833 (EKTGPLDGQT…AFLGDHGQQP (84 aa)).

This sequence belongs to the NAD-dependent DNA ligase family. LigA subfamily. Requires Mg(2+) as cofactor. Mn(2+) serves as cofactor.

The catalysed reaction is NAD(+) + (deoxyribonucleotide)n-3'-hydroxyl + 5'-phospho-(deoxyribonucleotide)m = (deoxyribonucleotide)n+m + AMP + beta-nicotinamide D-nucleotide.. In terms of biological role, DNA ligase that catalyzes the formation of phosphodiester linkages between 5'-phosphoryl and 3'-hydroxyl groups in double-stranded DNA using NAD as a coenzyme and as the energy source for the reaction. It is essential for DNA replication and repair of damaged DNA. This Xanthomonas axonopodis pv. citri (strain 306) protein is DNA ligase.